The following is an 870-amino-acid chain: METTLPLPFLVGVSVPPGLNDIKEGLSREEVSCLGCVFFEVKPQTLEKILRFLKRHNVEFEPYFDVTALESIDDIITLLDAGARKVFVKTEQLADLSAYGSRVAPIVTGSSAALLSSATESGLLLSGFDQTASEAAQFLEEARDKKITPFFIKPVPGADLEQFIQVAAKANAIPILPSTGLTTKKDEAGKLAISTILSSVWKSDRPDGLLPTVVVDEHDTALGLVYSSAESVNEALRTQTGVYQSRKRGLWYKGATSGDTQELVRISLDCDNDALKFVVKQKGRFCHLDQSGCFGQLKGLPKLEQTLISRKQSAPEGSYTARLFSDEKLVRAKIMEEAEELCTAQTPQEIAFEAADLFYFALTRAVAAGVTLADIERSLDAKSWKVKRRTGDAKGKWAEKEGIKPAASALAATSAPVTKEAAQETTPEKITMRRFDASKVSTEELDAALKRPAQKSSDAIYKIIVPIIEDVRKNGDKAVLSYTHKFEKATSLTSPVLKAPFPKELMQLPEETIAAIDVSFENIRKFHAAQKEEKPLQVETMPGVVCSRFSRPIEAVGCYIPGGTAVLPSTALMLGVPAMVAGCNKIVFASPPRADGTITPEIVYVAHKVGAESIVLAGGAQAVAAMAYGTESITKVDKILGPGNQFVTAAKMFVSNDTNAAVGIDMPAGPSEVLVIADKDANPAFVASDLLSQAEHGVDSQVILIAIDLDEEHLQAIEDEVHRQATELPRVQIVRGSIAHSITVQVKTVEEAMELSNKYAPEHLILQIKEAEKAVDLVMNAGSVFIGAWTPESVGDYSAGVNHSLPTYGFAKQYSGVNLASFVKHITSSNLTAEGLKNVGQAVMQLAKVEELEAHRRAVSIRLEHMSKSN.

The interval 1–285 (METTLPLPFL…KFVVKQKGRF (285 aa)) is phosphoribosyl-AMP cyclohydrolase. The segment at 286–367 (CHLDQSGCFG…FYFALTRAVA (82 aa)) is phosphoribosyl-ATP pyrophosphohydrolase. A histidinol dehydrogenase region spans residues 368 to 870 (AGVTLADIER…IRLEHMSKSN (503 aa)). Residues Gln-693 and His-696 each coordinate Zn(2+). Active-site residues include Glu-762 and His-763. Residues Asp-796 and His-855 each coordinate Zn(2+).

This sequence in the C-terminal section; belongs to the histidinol dehydrogenase family. The cofactor is Zn(2+).

It catalyses the reaction 1-(5-phospho-beta-D-ribosyl)-5'-AMP + H2O = 1-(5-phospho-beta-D-ribosyl)-5-[(5-phospho-beta-D-ribosylamino)methylideneamino]imidazole-4-carboxamide. The catalysed reaction is 1-(5-phospho-beta-D-ribosyl)-ATP + H2O = 1-(5-phospho-beta-D-ribosyl)-5'-AMP + diphosphate + H(+). It carries out the reaction L-histidinol + 2 NAD(+) + H2O = L-histidine + 2 NADH + 3 H(+). The protein operates within amino-acid biosynthesis; L-histidine biosynthesis; L-histidine from 5-phospho-alpha-D-ribose 1-diphosphate: step 2/9. It functions in the pathway amino-acid biosynthesis; L-histidine biosynthesis; L-histidine from 5-phospho-alpha-D-ribose 1-diphosphate: step 3/9. Its pathway is amino-acid biosynthesis; L-histidine biosynthesis; L-histidine from 5-phospho-alpha-D-ribose 1-diphosphate: step 9/9. The sequence is that of Histidine biosynthesis trifunctional protein (his-3) from Neurospora crassa (strain ATCC 24698 / 74-OR23-1A / CBS 708.71 / DSM 1257 / FGSC 987).